The following is a 200-amino-acid chain: NADH-ubiquinone oxidoreductase 21.3 kDa subunit (200 aa).

The next 3 membrane-spanning stretches (helical) occupy residues 16-36 (IKSGVSGALFSGGAGLLMASL), 48-68 (MHVFTHGGGTIISFTLAGGIY), and 105-125 (FPVILGFGAMAGSVVGAFAFS).

As to quaternary structure, complex I is composed of about 40 different subunits.

It is found in the mitochondrion inner membrane. It catalyses the reaction a ubiquinone + NADH + 5 H(+)(in) = a ubiquinol + NAD(+) + 4 H(+)(out). Transfer of electrons from NADH to the respiratory chain. The immediate electron acceptor for the enzyme is believed to be ubiquinone. The protein is NADH-ubiquinone oxidoreductase 21.3 kDa subunit of Neurospora crassa (strain ATCC 24698 / 74-OR23-1A / CBS 708.71 / DSM 1257 / FGSC 987).